We begin with the raw amino-acid sequence, 239 residues long: MKNNIITPRYNLEGVFLRQIHSFVCRKGRTTTSQLSAIKKYWSLIGVDFQLNALNFSSIFKHRAPIILEIGFGSGESLVKTAMNFPEKNFLGIEVYKSGIGSCLHYASSYQIQNLRIIYYDATEVMYNMIPDDTLSKVQIFFPDPWHKKRHHKRRLLKNIFLKIITKKLIIDGILHIATDSESYAFYILDEIKDIKNYKNLSEKNNFVKRPVSRIITKFEKKGLLQGKKIFDLMFQLKK.

S-adenosyl-L-methionine contacts are provided by Glu-69, Glu-94, Asp-121, and Asp-144. Residue Asp-144 is part of the active site. Substrate contacts are provided by residues Lys-148, Asp-180, and 217 to 220; that span reads TKFE.

Belongs to the class I-like SAM-binding methyltransferase superfamily. TrmB family. In terms of assembly, monomer.

The enzyme catalyses guanosine(46) in tRNA + S-adenosyl-L-methionine = N(7)-methylguanosine(46) in tRNA + S-adenosyl-L-homocysteine. It functions in the pathway tRNA modification; N(7)-methylguanine-tRNA biosynthesis. In terms of biological role, catalyzes the formation of N(7)-methylguanine at position 46 (m7G46) in tRNA. The chain is tRNA (guanine-N(7)-)-methyltransferase from Buchnera aphidicola subsp. Acyrthosiphon pisum (strain 5A).